The following is a 409-amino-acid chain: Protein naked cuticle homolog 2-like (409 aa).

G2 is lipidated: N-myristoyl glycine. Residues 109–144 form the EF-hand domain; the sequence is AEDNRQEWVFTLYDFDNSGKVTKEDMSSLMHTIYDV. 5 residues coordinate Ca(2+): D122, D124, S126, K128, and D133. Disordered stretches follow at residues 166–224, 243–315, 346–367, and 388–409; these read VTPE…YCVD, TSRF…RFPG, NHTHAHTPSGLQHSHSRRIRSR, and RHEHHHHHEHHHHHHYHHYHQT. Basic and acidic residues-rich tracts occupy residues 171 to 185 and 193 to 224; these read AARRRDATHTERETS and VRSEEHRSADRRQSTHIRGQTEAHEGNHYCVD. The span at 247-268 shows a compositional bias: low complexity; it reads DSSSPDADQDPPSRSSHSQSRP. Residues 389-409 show a composition bias toward basic residues; sequence HEHHHHHEHHHHHHYHHYHQT.

Belongs to the NKD family.

It localises to the cell membrane. It is found in the cytoplasm. Functionally, cell autonomous antagonist of both the canonical and non-canonical Wnt signaling pathways. The protein is Protein naked cuticle homolog 2-like (nkd2l) of Danio rerio (Zebrafish).